Here is a 453-residue protein sequence, read N- to C-terminus: MSPQTETKAGVGFKAGVKEYKLTYYTPEYETKDTDILAAFRVTPQPGVPPEERGAAVAAESSTGTWTTVWTDGLTSLDRYKGRCYHIEPVPGEEDQFIAYVAYPLDLFEEGSVTNMFTSIVGNVFGFKALRALRLEDLRIPVAYVKTFQGPPHGIQVERDKLNKYGRPLLECTIKPKLGLSAKNYGRAVYECLRGGLDFTKDDENVNSQPFMRWRDRFLFCAEAIYKSQAETGEIKGHYLNATAGTCEEMIKRAVFARELGVPIVMHDYLTGGFTANTSLSHYCRDNGLLLHIHRAMHAVIDRQKNHGMHFRVLAKALRMSGGDHIHSGTVVGKLEGERDITLGFVDLLRDDYIEKDRSRGIYFTQDWVSLPGVLPVASRGIHVWHMPALTEIFGDDSVLQFGGGTLGHPWGNAPGAVANRVALEACVKARNEGRDLAAEGGEIIREACKWSP.

Residues 1-2 (MS) constitute a propeptide that is removed on maturation. P3 carries the N-acetylproline modification. K14 is modified (N6,N6,N6-trimethyllysine). Residues N123 and T173 each coordinate substrate. Residue K175 is the Proton acceptor of the active site. A substrate-binding site is contributed by K177. K201, D203, and E204 together coordinate Mg(2+). An N6-carboxylysine modification is found at K201. The Proton acceptor role is filled by H294. Residues R295, H327, and S379 each contribute to the substrate site.

It belongs to the RuBisCO large chain family. Type I subfamily. In terms of assembly, heterohexadecamer of 8 large chains and 8 small chains; disulfide-linked. The disulfide link is formed within the large subunit homodimers. The cofactor is Mg(2+). In terms of processing, the disulfide bond which can form in the large chain dimeric partners within the hexadecamer appears to be associated with oxidative stress and protein turnover.

It is found in the plastid. It localises to the chloroplast. It carries out the reaction 2 (2R)-3-phosphoglycerate + 2 H(+) = D-ribulose 1,5-bisphosphate + CO2 + H2O. It catalyses the reaction D-ribulose 1,5-bisphosphate + O2 = 2-phosphoglycolate + (2R)-3-phosphoglycerate + 2 H(+). Functionally, ruBisCO catalyzes two reactions: the carboxylation of D-ribulose 1,5-bisphosphate, the primary event in carbon dioxide fixation, as well as the oxidative fragmentation of the pentose substrate in the photorespiration process. Both reactions occur simultaneously and in competition at the same active site. This chain is Ribulose bisphosphate carboxylase large chain, found in Valantia muralis (Wall valantia).